We begin with the raw amino-acid sequence, 227 residues long: MAYPFQLGLQDATSPIMEELLHFHDHTLMIVFLISSLVLYIISLMLTTKLTHTSTMDAQEVETVWTILPAIILILIALPSLRILYMMDEINNPSLTVKTMGHQWYWSYEYTDYEDLNFDSYMIPTQELKPGELRLLEVDNRVVLPMEMTVRMLISSEDVLHSWAVPSLGLKTDAIPGRLNQTTLMAMRPGLYYGQCSEICGSNHSFMPIVLEMVPLSYFETWSAVMV.

Residues 1 to 14 (MAYPFQLGLQDATS) are Mitochondrial intermembrane-facing. The chain crosses the membrane as a helical span at residues 15–45 (PIMEELLHFHDHTLMIVFLISSLVLYIISLM). Residues 46–59 (LTTKLTHTSTMDAQ) lie on the Mitochondrial matrix side of the membrane. The helical transmembrane segment at 60–87 (EVETVWTILPAIILILIALPSLRILYMM) threads the bilayer. Residues 88 to 227 (DEINNPSLTV…YFETWSAVMV (140 aa)) lie on the Mitochondrial intermembrane side of the membrane. Cu cation is bound by residues histidine 161, cysteine 196, glutamate 198, cysteine 200, histidine 204, and methionine 207. Glutamate 198 provides a ligand contact to Mg(2+). Residue tyrosine 218 is modified to Phosphotyrosine.

This sequence belongs to the cytochrome c oxidase subunit 2 family. In terms of assembly, component of the cytochrome c oxidase (complex IV, CIV), a multisubunit enzyme composed of 14 subunits. The complex is composed of a catalytic core of 3 subunits MT-CO1, MT-CO2 and MT-CO3, encoded in the mitochondrial DNA, and 11 supernumerary subunits COX4I, COX5A, COX5B, COX6A, COX6B, COX6C, COX7A, COX7B, COX7C, COX8 and NDUFA4, which are encoded in the nuclear genome. The complex exists as a monomer or a dimer and forms supercomplexes (SCs) in the inner mitochondrial membrane with NADH-ubiquinone oxidoreductase (complex I, CI) and ubiquinol-cytochrome c oxidoreductase (cytochrome b-c1 complex, complex III, CIII), resulting in different assemblies (supercomplex SCI(1)III(2)IV(1) and megacomplex MCI(2)III(2)IV(2)). Found in a complex with TMEM177, COA6, COX18, COX20, SCO1 and SCO2. Interacts with TMEM177 in a COX20-dependent manner. Interacts with COX20. Interacts with COX16. It depends on Cu cation as a cofactor.

It is found in the mitochondrion inner membrane. It carries out the reaction 4 Fe(II)-[cytochrome c] + O2 + 8 H(+)(in) = 4 Fe(III)-[cytochrome c] + 2 H2O + 4 H(+)(out). Functionally, component of the cytochrome c oxidase, the last enzyme in the mitochondrial electron transport chain which drives oxidative phosphorylation. The respiratory chain contains 3 multisubunit complexes succinate dehydrogenase (complex II, CII), ubiquinol-cytochrome c oxidoreductase (cytochrome b-c1 complex, complex III, CIII) and cytochrome c oxidase (complex IV, CIV), that cooperate to transfer electrons derived from NADH and succinate to molecular oxygen, creating an electrochemical gradient over the inner membrane that drives transmembrane transport and the ATP synthase. Cytochrome c oxidase is the component of the respiratory chain that catalyzes the reduction of oxygen to water. Electrons originating from reduced cytochrome c in the intermembrane space (IMS) are transferred via the dinuclear copper A center (CU(A)) of subunit 2 and heme A of subunit 1 to the active site in subunit 1, a binuclear center (BNC) formed by heme A3 and copper B (CU(B)). The BNC reduces molecular oxygen to 2 water molecules using 4 electrons from cytochrome c in the IMS and 4 protons from the mitochondrial matrix. In Lycalopex vetulus (Hoary fox), this protein is Cytochrome c oxidase subunit 2 (MT-CO2).